A 331-amino-acid chain; its full sequence is MNTTNILLLCGGGSSEHEVSIVSANYLFEQLNSVTDFNVVRVEIKNEGWCLDSGELVYLDINDQTLRGDNLESKVDFIVPCIHGFPGETGDIQSLFEMAKIPYLGCGSEASNNSFNKITSKLWYDALGIPNTPYLFLSDNTEQAHAQATQAFESWGKVFVKAARQGSSVGCYQVNQVEELSEAINKAFTFSDQVLIEKSVVPRELEVAAYEIDGELQISKPGEVIAPNGAFYSYEEKYSADSHSITEVEATNLTDEQRELIADSARKVFTQMKLRHLSRIDFFLTQDNEIYLNEVNTFPGMTPISMFPKMVEHDGHKFSQFLENCVRTSIS.

The ATP-grasp domain maps to 121–327 (KLWYDALGIP…FSQFLENCVR (207 aa)). 151-206 (AFESWGKVFVKAARQGSSVGCYQVNQVEELSEAINKAFTFSDQVLIEKSVVPRELE) is a binding site for ATP. Mg(2+) contacts are provided by Asp-281, Glu-294, and Asn-296.

It belongs to the D-alanine--D-alanine ligase family. Mg(2+) serves as cofactor. It depends on Mn(2+) as a cofactor.

The protein resides in the cytoplasm. It catalyses the reaction 2 D-alanine + ATP = D-alanyl-D-alanine + ADP + phosphate + H(+). It functions in the pathway cell wall biogenesis; peptidoglycan biosynthesis. Cell wall formation. This is D-alanine--D-alanine ligase from Vibrio atlanticus (strain LGP32) (Vibrio splendidus (strain Mel32)).